Here is a 193-residue protein sequence, read N- to C-terminus: Interleukin-23 subunit alpha (193 aa).

The first 22 residues, 1–22, serve as a signal peptide directing secretion; that stretch reads MLGSRAVMLMLLLLLLPWTSQG.

This sequence belongs to the IL-6 superfamily. In terms of assembly, heterodimer with IL12B; disulfide-linked. The heterodimer is known as interleukin IL-23. Interacts with IL23R; this interaction enables recruitment of IL12RB1.

Its subcellular location is the secreted. Its function is as follows. Associates with IL12B to form the pro-inflammatory cytokine IL-23 that plays different roles in innate and adaptive immunity. Released by antigen-presenting cells such as dendritic cells or macrophages, binds to a heterodimeric receptor complex composed of IL12RB1 and IL23R to activate JAK2 and TYK2 which then phosphorylate the receptor to form a docking site leading to the phosphorylation of STAT3 and STAT4. This process leads to activation of several pathways including p38 MAPK or NF-kappa-B and promotes the production of pro-inflammatory cytokines such as interleukin-17A/IL17A. In turn, participates in the early and effective intracellular bacterial clearance. Promotes the expansion and survival of T-helper 17 cells, a CD4-positive helper T-cell subset that produces IL-17, as well as other IL-17-producing cells. The protein is Interleukin-23 subunit alpha (IL23A) of Sus scrofa (Pig).